The chain runs to 702 residues: Protein sepa-1 (702 aa).

The interval 39–160 is required for self-association and interaction with pgl-3; that stretch reads RQRFCYEKTD…KESTSYGQFR (122 aa). 3 consecutive short sequence motifs (LIR) follow at residues 107–110, 247–250, and 298–301; these read FVEV, FQKI, and FGFV. Residues 450–471 form a disordered region; the sequence is AKDPEEPTTAASEGGNTYGYQE. The span at 458-468 shows a compositional bias: polar residues; it reads TAASEGGNTYG. The short motif at 469–472 is the LIR 4 element; the sequence is YQEL. Positions 508–543 form a coiled coil; the sequence is AAMDKKKKRRELKSRLNKINAQIDELEKRRMERAGK. Residues 545 to 564 are disordered; sequence QVVSSSVPSEEAAQVEAPAS. Residues 597–674 form the KIX domain; sequence NTSKEWIVED…TVDQILKKTL (78 aa). Basic and acidic residues predominate over residues 675-685; the sequence is KKDQRATEHNH. The disordered stretch occupies residues 675–702; that stretch reads KKDQRATEHNHQQPTQSSDELAKNHEKN.

In terms of assembly, self-associates. Interacts (via the LIR motifs) with lgg-1; the interaction is direct. Interacts (via the LIR motifs) with lgg-2; the interaction is direct. Interacts with pgl-3; interaction is enhanced in the presence of RNA. Interacts with epg-2; may be modulated by prmt-1. Post-translationally, degraded by autophagy.

Its subcellular location is the nucleus. The protein resides in the cytoplasm. It localises to the cytoplasmic granule. Functionally, adapter protein that connects P-granules in somatic cells with the autophagic machinery. Association with other adapters such as epg-2 and P-granule components such as pgl-3 is required for the accumulation and degradation of P-granules by autophagy in somatic cells. This ensures exclusive localization of the P-granules in germ cells. This chain is Protein sepa-1, found in Caenorhabditis elegans.